The sequence spans 310 residues: Fe-S cluster assembly protein dre2 (310 aa).

2 disordered regions span residues 1–30 and 165–184; these read MAPS…GKRT and APAP…DDND. Residues 24-154 are N-terminal SAM-like domain; it reads ADSGKRTLLL…KMDVGNGAAV (131 aa). Residues 155–202 are linker; the sequence is PLRLGRKKKAAPAPAPVVQPPPIISSDDNDLNDDELIDEDTLLSADDL. A compositionally biased stretch (pro residues) spans 167–177; sequence APAPVVQPPPI. Residues Cys212, Cys223, Cys226, and Cys228 each coordinate [2Fe-2S] cluster. The interval 212-228 is fe-S binding site A; the sequence is CQPKAGKRRRACKDCTC. 4 residues coordinate [4Fe-4S] cluster: Cys273, Cys276, Cys284, and Cys287. Short sequence motifs (cx2C motif) lie at residues 273 to 276 and 284 to 287; these read CGNC and CDGC. The segment at 273–287 is fe-S binding site B; it reads CGNCALGDAFRCDGC.

The protein belongs to the anamorsin family. As to quaternary structure, monomer. Interacts with tah18. Interacts with mia40. [2Fe-2S] cluster serves as cofactor. The cofactor is [4Fe-4S] cluster.

The protein localises to the cytoplasm. The protein resides in the mitochondrion intermembrane space. Component of the cytosolic iron-sulfur (Fe-S) protein assembly (CIA) machinery required for the maturation of extramitochondrial Fe-S proteins. Part of an electron transfer chain functioning in an early step of cytosolic Fe-S biogenesis, facilitating the de novo assembly of a [4Fe-4S] cluster on the scaffold complex cfd1-nbp35. Electrons are transferred to dre2 from NADPH via the FAD- and FMN-containing protein tah18. Tah18-dre2 are also required for the assembly of the diferric tyrosyl radical cofactor of ribonucleotide reductase (RNR), probably by providing electrons for reduction during radical cofactor maturation in the catalytic small subunit rnr2. This is Fe-S cluster assembly protein dre2 from Emericella nidulans (strain FGSC A4 / ATCC 38163 / CBS 112.46 / NRRL 194 / M139) (Aspergillus nidulans).